A 343-amino-acid chain; its full sequence is tRNA-specific 2-thiouridylase MnmA 2 (343 aa).

Residues 7–14 and L33 each bind ATP; that span reads GMSGGVDS. Catalysis depends on C91, which acts as the Nucleophile. A disulfide bond links C91 and C189. G115 contributes to the ATP binding site. The segment at 139–141 is interaction with tRNA; sequence KDQ. Catalysis depends on C189, which acts as the Cysteine persulfide intermediate.

This sequence belongs to the MnmA/TRMU family.

Its subcellular location is the cytoplasm. It carries out the reaction S-sulfanyl-L-cysteinyl-[protein] + uridine(34) in tRNA + AH2 + ATP = 2-thiouridine(34) in tRNA + L-cysteinyl-[protein] + A + AMP + diphosphate + H(+). In terms of biological role, catalyzes the 2-thiolation of uridine at the wobble position (U34) of tRNA, leading to the formation of s(2)U34. This Fusobacterium nucleatum subsp. nucleatum (strain ATCC 25586 / DSM 15643 / BCRC 10681 / CIP 101130 / JCM 8532 / KCTC 2640 / LMG 13131 / VPI 4355) protein is tRNA-specific 2-thiouridylase MnmA 2.